A 1196-amino-acid chain; its full sequence is uncharacterized protein (1196 aa).

The helical transmembrane segment at isoleucine 27–leucine 47 threads the bilayer. Disordered stretches follow at residues glycine 150–histidine 345, serine 367–proline 402, threonine 669–threonine 762, cysteine 775–isoleucine 806, glutamine 826–glutamate 877, tyrosine 960–lysine 1009, and lysine 1168–methionine 1196. Over residues valine 157–proline 177 the composition is skewed to polar residues. Low complexity-rich tracts occupy residues histidine 212–threonine 227 and threonine 253–histidine 279. The segment covering histidine 299–histidine 321 has biased composition (polar residues). A compositionally biased stretch (pro residues) spans alanine 391–proline 402. Polar residues-rich tracts occupy residues tyrosine 733–glutamine 742, serine 750–threonine 762, proline 787–serine 804, and glutamine 826–valine 849. Positions serine 962 to leucine 971 are enriched in basic and acidic residues.

It is found in the membrane. This is an uncharacterized protein from Homo sapiens (Human).